The primary structure comprises 41 residues: Ranatuerin-2PLg (41 aa).

The propeptide occupies 1–11; that stretch reads DDGVEMTEEEV. A disulfide bridge links C36 with C41.

This sequence belongs to the frog skin active peptide (FSAP) family. Ranatuerin subfamily.

The protein resides in the secreted. Functionally, antimicrobial peptide. This chain is Ranatuerin-2PLg, found in Lithobates palustris (Pickerel frog).